The chain runs to 292 residues: NADH-cytochrome b5 reductase 1 (292 aa).

The helical transmembrane segment at 12–32 (ALLVVGTAIFAVLVGAKFLGG) threads the bilayer. The FAD-binding FR-type domain occupies 43 to 148 (TEFQNFVLKE…RGPKGAMVYT (106 aa)). FAD-binding positions include 128-143 (TTLK…GPKG) and 154-191 (HIGM…QVDL).

The protein belongs to the flavoprotein pyridine nucleotide cytochrome reductase family. In terms of assembly, monomer. Component of the 2-(3-amino-3-carboxypropyl)histidine synthase complex composed of dph1, dph2, dph3 and a NADH-dependent reductase, predominantly cbr1. FAD serves as cofactor.

Its subcellular location is the mitochondrion outer membrane. The catalysed reaction is 2 Fe(III)-[cytochrome b5] + NADH = 2 Fe(II)-[cytochrome b5] + NAD(+) + H(+). It catalyses the reaction 2 Fe(3+)-[Dph3] + NADH = 2 Fe(2+)-[Dph3] + NAD(+) + H(+). The protein operates within protein modification; peptidyl-diphthamide biosynthesis. In terms of biological role, NADH-dependent reductase for dph3 and cytochrome b5. Required for the first step of diphthamide biosynthesis, a post-translational modification of histidine which occurs in elongation factor 2. Dph1 and dph2 transfer a 3-amino-3-carboxypropyl (ACP) group from S-adenosyl-L-methionine (SAM) to a histidine residue, the reaction is assisted by a reduction system comprising dph3 and a NADH-dependent reductase, predominantly cbr1. By reducing dph3, also involved in the formation of the tRNA wobble base modification mcm5s 2U (5-methoxycarbonylmethyl-2-thiouridine), mediated by the elongator complex. The cytochrome b5/NADH cytochrome b5 reductase electron transfer system supports the catalytic activity of several sterol biosynthetic enzymes. The sequence is that of NADH-cytochrome b5 reductase 1 (cbr1) from Aspergillus oryzae (strain ATCC 42149 / RIB 40) (Yellow koji mold).